The following is a 257-amino-acid chain: AT-hook motif nuclear-localized protein 16 (257 aa).

The tract at residues 1 to 71 (MAGGTALTPT…SKNKPKPPII (71 aa)) is disordered. Residues 53–65 (KRPRGRPAGSKNK) constitute a DNA-binding region (a.T hook). The PPC domain maps to 77–214 (PNSLRANAVE…DEAASMQNQQ (138 aa)).

Interacts with FVE/MSI4 and MSI5 which are components of HDAC corepressor complexes. In terms of tissue distribution, preferentially expressed in the inflorescence meristem and young floral buds, as well as in seedling-stage vegetative meristems. Widely expressed in flowers, roots and stems, with relatively low expression in leaves.

It is found in the nucleus. Its function is as follows. Transcription factor that specifically binds AT-rich DNA sequences related to the nuclear matrix attachment regions (MARs). Encodes a nuclear matrix protein that acts in the maintenance of genomic integrity by silencing TEs and repeat-containing genes through epigenetic machinery. Acts as a chromatin remodeling factor that modifies the architecture of FLC and FWA chromatin by modulating both H3 acetylation and methylation leading to the regulation of FLC and FWA expression. Negatively regulates floral repressors including MAF4 and MAF5. Plays a transcription activation role in anther development. Regulates the expression of arabinogalactan proteins (AGPs) involved in the formation of the nexine layer of the pollen wall. Binds AGP6, AGP11, AGP23 and AGP40 promoters. This chain is AT-hook motif nuclear-localized protein 16, found in Arabidopsis thaliana (Mouse-ear cress).